The sequence spans 174 residues: Centrosomal protein 20 (174 aa).

Residues 1 to 104 (MATVAELKAV…AFEESKDNTI (104 aa)) are necessary and sufficient for homooligomerization and localization to centrosomes and pericentriolar satellites. Residues 49-81 (ENLLINELIREYLEFNKYKYTASVLIAESGQPV) enclose the LisH domain. The interval 129-174 (GPSLQPSDPSLGRQPSRRKPMDDHLRKEEQKSTNIEDLHVSQAVNR) is disordered. At Ser144 the chain carries Phosphoserine. Positions 147–167 (KPMDDHLRKEEQKSTNIEDLH) are enriched in basic and acidic residues.

The protein belongs to the CEP43 family. As to quaternary structure, homooligomer; probably required for localization to centrosomes. Forms a complex with KIAA0753/OFIP and OFD1; within this complex may stabilize the interaction between OFD1 and KIAA0753/OFIP. Interacts with PCM1; this interaction may be mediated by KIAA0753/OFIP. Interacts with PLK1 in later G1, S, G2 and M phases of the cell cycle; this interaction recruits PLK1 to centrosomes. In terms of tissue distribution, widely expressed. Detected in brain, heart, kidney, liver, lung, skeletal muscle, placenta and intestine.

It is found in the cytoplasm. It localises to the cytoskeleton. The protein localises to the microtubule organizing center. Its subcellular location is the centrosome. The protein resides in the centriole. It is found in the cell projection. It localises to the cilium. The protein localises to the cilium basal body. Its subcellular location is the cytoplasmic granule. The protein resides in the centriolar satellite. Functionally, involved in the biogenesis of cilia. Required for the recruitment of PLK1 to centrosomes and S phase progression. This chain is Centrosomal protein 20, found in Homo sapiens (Human).